Reading from the N-terminus, the 197-residue chain is MSHFFAHLSRLKLINRWPLMRNVRTENVSEHSLQVAFVAHALAIIKNRKFGGNVNAERIALLAMYHDASEVITGDLPTPVKYHNPHIAREYKKIEKIAQKKLLEMLPTELQEDFRPILDDSQHTTEETFIIKQADSLCAYLKCLEELSAGNHEFNLAIARLEKTLADRHSQEMDYFMKVFVPGFSLSLDEISLDIPH.

Substrate-binding positions include 16–17 (RW) and His31. The HD domain maps to 28-140 (VSEHSLQVAF…IKQADSLCAY (113 aa)). A divalent metal cation contacts are provided by His31, His66, and Asp67. Residues Asp67, 75 to 78 (DLPT), and Asp135 contribute to the substrate site. Asp135 lines the a divalent metal cation pocket.

Belongs to the 5DNU family. As to quaternary structure, homodimer. Requires a divalent metal cation as cofactor.

The protein localises to the cytoplasm. The catalysed reaction is a 2'-deoxyribonucleoside 5'-phosphate + H2O = a 2'-deoxyribonucleoside + phosphate. In terms of biological role, catalyzes the strictly specific dephosphorylation of 2'-deoxyribonucleoside 5'-monophosphates. In Photorhabdus laumondii subsp. laumondii (strain DSM 15139 / CIP 105565 / TT01) (Photorhabdus luminescens subsp. laumondii), this protein is 5'-deoxynucleotidase plu3092.